The sequence spans 443 residues: Xaa-Pro dipeptidase (443 aa).

Mn(2+) is bound by residues Asp-246, Asp-257, His-339, Glu-384, and Glu-423.

The protein belongs to the peptidase M24B family. Bacterial-type prolidase subfamily. Requires Mn(2+) as cofactor.

It carries out the reaction Xaa-L-Pro dipeptide + H2O = an L-alpha-amino acid + L-proline. Its function is as follows. Splits dipeptides with a prolyl residue in the C-terminal position. In Serratia proteamaculans (strain 568), this protein is Xaa-Pro dipeptidase.